Reading from the N-terminus, the 97-residue chain is Large ribosomal subunit protein bL27 (97 aa).

Positions 1–9 (MFTFDLQLF) are excised as a propeptide.

It belongs to the bacterial ribosomal protein bL27 family. In terms of processing, the N-terminus is cleaved by ribosomal processing cysteine protease Prp.

This Syntrophomonas wolfei subsp. wolfei (strain DSM 2245B / Goettingen) protein is Large ribosomal subunit protein bL27.